Here is a 469-residue protein sequence, read N- to C-terminus: Ribosomal protein uS12 methylthiotransferase RimO (469 aa).

The 111-residue stretch at 34–144 folds into the MTTase N-terminal domain; that stretch reads NKIGFVSLGC…VLEHVHQFAP (111 aa). Positions 43, 79, 108, 176, 180, and 183 each coordinate [4Fe-4S] cluster. One can recognise a Radical SAM core domain in the interval 162-399; it reads LTPKHYAYLK…MLVQQEISAA (238 aa). One can recognise a TRAM domain in the interval 402 to 468; it reads QKRIGSTMKV…EYDLWGSLVR (67 aa).

This sequence belongs to the methylthiotransferase family. RimO subfamily. Requires [4Fe-4S] cluster as cofactor.

It localises to the cytoplasm. It catalyses the reaction L-aspartate(89)-[ribosomal protein uS12]-hydrogen + (sulfur carrier)-SH + AH2 + 2 S-adenosyl-L-methionine = 3-methylsulfanyl-L-aspartate(89)-[ribosomal protein uS12]-hydrogen + (sulfur carrier)-H + 5'-deoxyadenosine + L-methionine + A + S-adenosyl-L-homocysteine + 2 H(+). Catalyzes the methylthiolation of an aspartic acid residue of ribosomal protein uS12. In Vibrio vulnificus (strain CMCP6), this protein is Ribosomal protein uS12 methylthiotransferase RimO.